Here is a 402-residue protein sequence, read N- to C-terminus: NADH-quinone oxidoreductase subunit D (402 aa).

Belongs to the complex I 49 kDa subunit family. As to quaternary structure, NDH-1 is composed of 14 different subunits. Subunits NuoB, C, D, E, F, and G constitute the peripheral sector of the complex.

Its subcellular location is the cell inner membrane. The enzyme catalyses a quinone + NADH + 5 H(+)(in) = a quinol + NAD(+) + 4 H(+)(out). Its function is as follows. NDH-1 shuttles electrons from NADH, via FMN and iron-sulfur (Fe-S) centers, to quinones in the respiratory chain. The immediate electron acceptor for the enzyme in this species is believed to be ubiquinone. Couples the redox reaction to proton translocation (for every two electrons transferred, four hydrogen ions are translocated across the cytoplasmic membrane), and thus conserves the redox energy in a proton gradient. This is NADH-quinone oxidoreductase subunit D from Rhodopseudomonas palustris (strain ATCC BAA-98 / CGA009).